A 62-amino-acid chain; its full sequence is Large ribosomal subunit protein uL30 (62 aa).

Belongs to the universal ribosomal protein uL30 family. Part of the 50S ribosomal subunit.

This chain is Large ribosomal subunit protein uL30, found in Polynucleobacter asymbioticus (strain DSM 18221 / CIP 109841 / QLW-P1DMWA-1) (Polynucleobacter necessarius subsp. asymbioticus).